We begin with the raw amino-acid sequence, 444 residues long: Protein-serine O-palmitoleoyltransferase porcupine (444 aa).

A run of 10 helical transmembrane segments spans residues Asn29–Trp49, Val81–Gly101, Phe128–Val150, Thr163–Phe183, Leu201–Ser221, Tyr249–Ala269, Phe304–Ala324, Asp326–Phe346, Val383–Met403, and Trp420–Leu440. His323 is a catalytic residue.

It belongs to the membrane-bound acyltransferase family. Porcupine subfamily.

It is found in the membrane. The enzyme catalyses [Wnt protein]-L-serine + (9Z)-hexadecenoyl-CoA = [Wnt protein]-O-(9Z)-hexadecenoyl-L-serine + CoA. Key regulator of the Wnt signaling pathway that mediates lipid modification of Wnt proteins. Acts as a protein-serine O-palmitoleoyltransferase that catalyzes the attachment of palmitoleate, a 16-carbon monounsaturated fatty acid (C16:1(9Z)), to Wnt proteins. Serine palmitoleoylation of WNT proteins is required for efficient binding to frizzled receptors. Has a role in cell specification, specifically in blastomere signaling. Involved in cytosketetal polarity. Required for the orientation of mitotic spindle axis. The sequence is that of Protein-serine O-palmitoleoyltransferase porcupine from Caenorhabditis briggsae.